The primary structure comprises 383 residues: Succinyl-diaminopimelate desuccinylase (383 aa).

H72 is a Zn(2+) binding site. D74 is an active-site residue. Zn(2+) is bound at residue D105. E139 serves as the catalytic Proton acceptor. E140, E168, and H356 together coordinate Zn(2+).

The protein belongs to the peptidase M20A family. DapE subfamily. As to quaternary structure, homodimer. Zn(2+) serves as cofactor. It depends on Co(2+) as a cofactor.

The enzyme catalyses N-succinyl-(2S,6S)-2,6-diaminopimelate + H2O = (2S,6S)-2,6-diaminopimelate + succinate. Its pathway is amino-acid biosynthesis; L-lysine biosynthesis via DAP pathway; LL-2,6-diaminopimelate from (S)-tetrahydrodipicolinate (succinylase route): step 3/3. Catalyzes the hydrolysis of N-succinyl-L,L-diaminopimelic acid (SDAP), forming succinate and LL-2,6-diaminopimelate (DAP), an intermediate involved in the bacterial biosynthesis of lysine and meso-diaminopimelic acid, an essential component of bacterial cell walls. The chain is Succinyl-diaminopimelate desuccinylase from Beijerinckia indica subsp. indica (strain ATCC 9039 / DSM 1715 / NCIMB 8712).